A 445-amino-acid polypeptide reads, in one-letter code: Acetylcholine-gated chloride channel subunit acc-2 (445 aa).

The first 26 residues, 1-26, serve as a signal peptide directing secretion; that stretch reads MIFTLLSTLPVLIITTELDYSELVHS. The Extracellular segment spans residues 27–258; it reads AELVSSSSYI…LHVTIIFERR (232 aa). 4 N-linked (GlcNAc...) asparagine glycosylation sites follow: asparagine 46, asparagine 59, asparagine 121, and asparagine 162. Cysteines 177 and 191 form a disulfide. Residue asparagine 218 is glycosylated (N-linked (GlcNAc...) asparagine). The chain crosses the membrane as a helical span at residues 259-279; sequence FIWYFMQAYLPTYLTIFISWI. Residues 280 to 286 are Cytoplasmic-facing; the sequence is SFSLGSR. Residues 287–307 form a helical membrane-spanning segment; sequence AIPARTMLGVNSLLAIVFSFG. The Extracellular portion of the chain corresponds to 308 to 326; sequence NIMRNLPRVSYIKGIDVWM. The helical transmembrane segment at 327 to 347 threads the bilayer; that stretch reads LVSMTFIFCSLLELAIVGFMV. The Cytoplasmic segment spans residues 348 to 407; that stretch reads RDETVAKKKQQKKISGNISREESPHGIISERRFMFPPGCSESSKSLSSCTSGWTPERIDS. The chain crosses the membrane as a helical span at residues 408–428; sequence ISSVMFPFSFFVFNIIYWFYY. Topologically, residues 429–445 are extracellular; it reads IHRKEIIKQNLINRVDG.

The protein belongs to the ligand-gated ion channel (TC 1.A.9) family. Homopentamer (in vitro). May interact with either acc-3 or acc-4; the interactions do not result in significant heteropentameric ion channel activity. In terms of tissue distribution, expressed in RIA, RIG, PHA and AIZ glutamatergic neurons, URX and RIH cholinergic neurons, and in male-specific MCM neurons.

Its subcellular location is the cell membrane. In terms of biological role, acetylcholine-gated chloride channel subunit. Currents in channels are triggered in response to acetylcholine. Channel properties may be modulated by the formation of homomeric and heteromeric channels. The protein is Acetylcholine-gated chloride channel subunit acc-2 of Caenorhabditis elegans.